A 314-amino-acid polypeptide reads, in one-letter code: Ribosomal protein L11 methyltransferase (314 aa).

The S-adenosyl-L-methionine site is built by threonine 161, glycine 182, aspartate 204, and asparagine 248.

Belongs to the methyltransferase superfamily. PrmA family.

The protein localises to the cytoplasm. The enzyme catalyses L-lysyl-[protein] + 3 S-adenosyl-L-methionine = N(6),N(6),N(6)-trimethyl-L-lysyl-[protein] + 3 S-adenosyl-L-homocysteine + 3 H(+). In terms of biological role, methylates ribosomal protein L11. This Listeria welshimeri serovar 6b (strain ATCC 35897 / DSM 20650 / CCUG 15529 / CIP 8149 / NCTC 11857 / SLCC 5334 / V8) protein is Ribosomal protein L11 methyltransferase.